We begin with the raw amino-acid sequence, 394 residues long: MQKTATTPSKILDLTAAAFLLVAFLTGIAGALQTPTLSIFLADELKARPIMVGFFFTGSAIMGILVSQFLARHSDKQGDRKLLILLCCLFGVLACTLFAWNRNYFILLSTGVLLSSFASTANPQMFALAREHADRTGRETVMFSTFLRAQISLAWVIGPPLAYELAMGFSFKVMYLTAAIAFVVCGLIVWLFLPSIQRNIPVVTQPVEILPSTHRKRDTRLLFVVCSMMWAANNLYMINMPLFIIDELHLTDKLTGEMIGIAAGLEIPMMLIAGYYMKRIGKRLLMLIAIVSGMCFYASVLMATTPAVELELQILNAIFLGILCGIGMLYFQDLMPEKIGSATTLYANTSRVGWIIAGSVDGIMVEIWSYHALFWLAIGMLGIAMICLLFIKDI.

Residues 1 to 10 (MQKTATTPSK) lie on the Periplasmic side of the membrane. A helical membrane pass occupies residues 11–31 (ILDLTAAAFLLVAFLTGIAGA). Over 32 to 49 (LQTPTLSIFLADELKARP) the chain is Cytoplasmic. The helical transmembrane segment at 50 to 70 (IMVGFFFTGSAIMGILVSQFL) threads the bilayer. Topologically, residues 71–80 (ARHSDKQGDR) are periplasmic. The chain crosses the membrane as a helical span at residues 81–101 (KLLILLCCLFGVLACTLFAWN). The Cytoplasmic segment spans residues 102-104 (RNY). Residues 105-125 (FILLSTGVLLSSFASTANPQM) form a helical membrane-spanning segment. Topologically, residues 126 to 150 (FALAREHADRTGRETVMFSTFLRAQ) are periplasmic. Residues 151–171 (ISLAWVIGPPLAYELAMGFSF) traverse the membrane as a helical segment. Residue K172 is a topological domain, cytoplasmic. Residues 173 to 193 (VMYLTAAIAFVVCGLIVWLFL) form a helical membrane-spanning segment. The Periplasmic segment spans residues 194–224 (PSIQRNIPVVTQPVEILPSTHRKRDTRLLFV). The helical transmembrane segment at 225 to 245 (VCSMMWAANNLYMINMPLFII) threads the bilayer. Topologically, residues 246-253 (DELHLTDK) are cytoplasmic. The helical transmembrane segment at 254-274 (LTGEMIGIAAGLEIPMMLIAG) threads the bilayer. The Periplasmic portion of the chain corresponds to 275–283 (YYMKRIGKR). A helical membrane pass occupies residues 284-304 (LLMLIAIVSGMCFYASVLMAT). The Cytoplasmic portion of the chain corresponds to 305 to 310 (TPAVEL). The helical transmembrane segment at 311–331 (ELQILNAIFLGILCGIGMLYF) threads the bilayer. Residues 332-370 (QDLMPEKIGSATTLYANTSRVGWIIAGSVDGIMVEIWSY) lie on the Periplasmic side of the membrane. Residues 371-391 (HALFWLAIGMLGIAMICLLFI) form a helical membrane-spanning segment. Over 392–394 (KDI) the chain is Cytoplasmic.

It belongs to the major facilitator superfamily. Set transporter family.

It localises to the cell inner membrane. Its function is as follows. Involved in the efflux of sugars. The physiological role may be the detoxification of non-metabolizable sugar analogs. The polypeptide is Sugar efflux transporter C (setC) (Escherichia coli (strain K12)).